Consider the following 481-residue polypeptide: Proline--tRNA ligase (481 aa).

It belongs to the class-II aminoacyl-tRNA synthetase family. ProS type 3 subfamily. Homodimer.

It localises to the cytoplasm. It catalyses the reaction tRNA(Pro) + L-proline + ATP = L-prolyl-tRNA(Pro) + AMP + diphosphate. In terms of biological role, catalyzes the attachment of proline to tRNA(Pro) in a two-step reaction: proline is first activated by ATP to form Pro-AMP and then transferred to the acceptor end of tRNA(Pro). This Pelodictyon phaeoclathratiforme (strain DSM 5477 / BU-1) protein is Proline--tRNA ligase.